A 384-amino-acid chain; its full sequence is Anhydro-N-acetylmuramic acid kinase (384 aa).

9–16 (GTSADGVD) provides a ligand contact to ATP.

This sequence belongs to the anhydro-N-acetylmuramic acid kinase family.

The enzyme catalyses 1,6-anhydro-N-acetyl-beta-muramate + ATP + H2O = N-acetyl-D-muramate 6-phosphate + ADP + H(+). It functions in the pathway amino-sugar metabolism; 1,6-anhydro-N-acetylmuramate degradation. The protein operates within cell wall biogenesis; peptidoglycan recycling. Functionally, catalyzes the specific phosphorylation of 1,6-anhydro-N-acetylmuramic acid (anhMurNAc) with the simultaneous cleavage of the 1,6-anhydro ring, generating MurNAc-6-P. Is required for the utilization of anhMurNAc either imported from the medium or derived from its own cell wall murein, and thus plays a role in cell wall recycling. This is Anhydro-N-acetylmuramic acid kinase from Synechococcus sp. (strain CC9311).